A 256-amino-acid chain; its full sequence is uncharacterized protein (256 aa).

The disordered stretch occupies residues 1 to 23; that stretch reads MIPPCENAPHIIYHESQRGTRDR. A compositionally biased stretch (basic and acidic residues) spans 12–23; sequence IYHESQRGTRDR.

This is an uncharacterized protein from Homo sapiens (Human).